The primary structure comprises 91 residues: Cell division protein FtsB (91 aa).

Residues 1–3 (MKF) lie on the Cytoplasmic side of the membrane. A helical transmembrane segment spans residues 4-21 (IVGLLLVLLLALQYQLWI). Topologically, residues 22-91 (SKDGLGELRQ…ETFFQVVEEP (70 aa)) are periplasmic. A coiled-coil region spans residues 26 to 74 (LGELRQLSRSIKQQRHENATLIERNQVLKAEVQDLKSGLDALEERARSG).

The protein belongs to the FtsB family. As to quaternary structure, part of a complex composed of FtsB, FtsL and FtsQ.

It localises to the cell inner membrane. Functionally, essential cell division protein. May link together the upstream cell division proteins, which are predominantly cytoplasmic, with the downstream cell division proteins, which are predominantly periplasmic. In Nitrosococcus oceani (strain ATCC 19707 / BCRC 17464 / JCM 30415 / NCIMB 11848 / C-107), this protein is Cell division protein FtsB.